We begin with the raw amino-acid sequence, 508 residues long: Splicing regulatory glutamine/lysine-rich protein 1 (508 aa).

Positions 66–142 (RTVYVGNLNS…RPLKINHSNN (77 aa)) constitute an RRM domain. Phosphoserine is present on residues S171 and S184. Positions 173–508 (ISAAIEPESG…ENLSTKTEAV (336 aa)) are disordered. Residues 180–189 (ESGKSNERKG) are compositionally biased toward basic and acidic residues. Residues 190 to 259 (GRSRSHTRSK…KSRSRSHSRD (70 aa)) are compositionally biased toward basic residues. The span at 260-355 (KRKDTREKIK…DRSKEIDEKR (96 aa)) shows a compositional bias: basic and acidic residues. T363 carries the post-translational modification Phosphothreonine. Residues 372–388 (RRSRSSSRERRRRRSRS) are compositionally biased toward basic residues. The segment covering 419-488 (REKERDHISE…DAPRTEENKI (70 aa)) has biased composition (basic and acidic residues). Residues 489-508 (QHNGNCQLNEENLSTKTEAV) show a composition bias toward polar residues. K504 participates in a covalent cross-link: Glycyl lysine isopeptide (Lys-Gly) (interchain with G-Cter in SUMO2).

It belongs to the splicing factor SR family. In terms of assembly, homodimer. Binds SFRS1, SFRS2, SFRS3 and SFRS6. Interacts with the spliceosome. Interacts with SREK1IP1.

The protein resides in the nucleus. In terms of biological role, participates in the regulation of alternative splicing by modulating the activity of other splice facors. Inhibits the splicing activity of SFRS1, SFRS2 and SFRS6. Augments the splicing activity of SFRS3. This is Splicing regulatory glutamine/lysine-rich protein 1 (SREK1) from Homo sapiens (Human).